The primary structure comprises 455 residues: Nucleoside-triphosphatase (455 aa).

The active-site Proton acceptor is the Glu168.

It belongs to the GDA1/CD39 NTPase family.

The protein resides in the nucleus. It catalyses the reaction a ribonucleoside 5'-triphosphate + H2O = a ribonucleoside 5'-diphosphate + phosphate + H(+). In terms of biological role, might be involved in RNA transport out of nuclei. The protein is Nucleoside-triphosphatase of Pisum sativum (Garden pea).